The sequence spans 210 residues: Glycerol-3-phosphate acyltransferase (210 aa).

Transmembrane regions (helical) follow at residues 1-21 (MLLSVVAIALLAYLLGSFPAG), 53-73 (GPALVVFITDILKGVLAVVAA), 87-107 (IAWLAAFAAIIAVVGHSLPVW), 122-142 (VLLALSPVVGLSGFGAFLLLL), and 147-167 (IVSLGSIAGAITVIVLMLILP).

This sequence belongs to the PlsY family. As to quaternary structure, probably interacts with PlsX.

It localises to the cell inner membrane. It carries out the reaction an acyl phosphate + sn-glycerol 3-phosphate = a 1-acyl-sn-glycero-3-phosphate + phosphate. It functions in the pathway lipid metabolism; phospholipid metabolism. Its function is as follows. Catalyzes the transfer of an acyl group from acyl-phosphate (acyl-PO(4)) to glycerol-3-phosphate (G3P) to form lysophosphatidic acid (LPA). This enzyme utilizes acyl-phosphate as fatty acyl donor, but not acyl-CoA or acyl-ACP. The sequence is that of Glycerol-3-phosphate acyltransferase from Synechococcus elongatus (strain ATCC 33912 / PCC 7942 / FACHB-805) (Anacystis nidulans R2).